We begin with the raw amino-acid sequence, 246 residues long: Electron transfer flavoprotein beta subunit lysine methyltransferase (246 aa).

Belongs to the methyltransferase superfamily. ETFBKMT family.

It is found in the cytoplasm. It localises to the mitochondrion matrix. The catalysed reaction is L-lysyl-[protein] + 3 S-adenosyl-L-methionine = N(6),N(6),N(6)-trimethyl-L-lysyl-[protein] + 3 S-adenosyl-L-homocysteine + 3 H(+). In terms of biological role, protein-lysine methyltransferase that selectively trimethylates the flavoprotein ETFB in mitochondria. Thereby, may negatively regulate the function of ETFB in electron transfer from Acyl-CoA dehydrogenases to the main respiratory chain. In Xenopus laevis (African clawed frog), this protein is Electron transfer flavoprotein beta subunit lysine methyltransferase (etfbkmt).